Reading from the N-terminus, the 314-residue chain is 4-hydroxy-3-methylbut-2-enyl diphosphate reductase (314 aa).

Position 12 (Cys12) interacts with [4Fe-4S] cluster. (2E)-4-hydroxy-3-methylbut-2-enyl diphosphate contacts are provided by His41 and His74. Positions 41 and 74 each coordinate dimethylallyl diphosphate. Residues His41 and His74 each contribute to the isopentenyl diphosphate site. Cys96 provides a ligand contact to [4Fe-4S] cluster. Residue His124 participates in (2E)-4-hydroxy-3-methylbut-2-enyl diphosphate binding. Dimethylallyl diphosphate is bound at residue His124. Residue His124 coordinates isopentenyl diphosphate. Glu126 serves as the catalytic Proton donor. Thr167 lines the (2E)-4-hydroxy-3-methylbut-2-enyl diphosphate pocket. Residue Cys197 participates in [4Fe-4S] cluster binding. 4 residues coordinate (2E)-4-hydroxy-3-methylbut-2-enyl diphosphate: Ser225, Ser226, Asn227, and Ser269. Positions 225, 226, 227, and 269 each coordinate dimethylallyl diphosphate. The isopentenyl diphosphate site is built by Ser225, Ser226, Asn227, and Ser269.

It belongs to the IspH family. [4Fe-4S] cluster is required as a cofactor.

The enzyme catalyses isopentenyl diphosphate + 2 oxidized [2Fe-2S]-[ferredoxin] + H2O = (2E)-4-hydroxy-3-methylbut-2-enyl diphosphate + 2 reduced [2Fe-2S]-[ferredoxin] + 2 H(+). It carries out the reaction dimethylallyl diphosphate + 2 oxidized [2Fe-2S]-[ferredoxin] + H2O = (2E)-4-hydroxy-3-methylbut-2-enyl diphosphate + 2 reduced [2Fe-2S]-[ferredoxin] + 2 H(+). It functions in the pathway isoprenoid biosynthesis; dimethylallyl diphosphate biosynthesis; dimethylallyl diphosphate from (2E)-4-hydroxy-3-methylbutenyl diphosphate: step 1/1. The protein operates within isoprenoid biosynthesis; isopentenyl diphosphate biosynthesis via DXP pathway; isopentenyl diphosphate from 1-deoxy-D-xylulose 5-phosphate: step 6/6. Catalyzes the conversion of 1-hydroxy-2-methyl-2-(E)-butenyl 4-diphosphate (HMBPP) into a mixture of isopentenyl diphosphate (IPP) and dimethylallyl diphosphate (DMAPP). Acts in the terminal step of the DOXP/MEP pathway for isoprenoid precursor biosynthesis. This is 4-hydroxy-3-methylbut-2-enyl diphosphate reductase from Actinobacillus pleuropneumoniae serotype 3 (strain JL03).